The primary structure comprises 485 residues: Pumilio domain-containing protein 7 (485 aa).

The segment at 29–72 (NKTHKNKNPKPPVKLLPYRHGSNTTSSDSDSYIFNSGSGSSDAE) is disordered. A compositionally biased stretch (polar residues) spans 49 to 71 (GSNTTSSDSDSYIFNSGSGSSDA). 8 Pumilio repeats span residues 86–124 (DVLLNGQLIDFAIDPSGVKFLEANYPLDSEDQIRKAVFE), 128–163 (ESTTLFVGLCHSRNGNFIVQKLVELATPAEQRELLR), 164–200 (QMIDGGLLAMCKDKFACRVVQLALQKFDHSNVFQLIQ), 201–236 (ELSTFDLAAMCTDQISIHVIQRVVKQLPVDMWTFFV), 237–279 (HFLS…FRIQ), 287–324 (CIVRNCYRLSSNEFANYVIQYVIKSSGIMEMYRDTIID), 326–361 (CLLRNLLSMSQDKYASHVIEGAFLFAPPALLHEMME), and 370–411 (DVES…RELP). An RNA-binding region spans residues 439–454 (FSSGKKIIDSVMRHGV).

Its function is as follows. RNA-binding protein that binds to the consensus sequence 5'-CUCUGUAUCUUGU-3' in mRNA 3'-UTRs and modulates mRNA expression and stability. Functions redundantly with puf-5 and puf-6 in oocyte formation and organization, early embryonic cell divisions, and repression of expression of glp-1 and other maternal mRNAs in late oogenesis. This Caenorhabditis elegans protein is Pumilio domain-containing protein 7.